We begin with the raw amino-acid sequence, 216 residues long: MOB kinase activator-like 2A (216 aa).

The Zn(2+) site is built by Cys-81, Cys-86, His-162, and His-167.

This sequence belongs to the MOB1/phocein family.

It is found in the nucleus. The sequence is that of MOB kinase activator-like 2A from Arabidopsis thaliana (Mouse-ear cress).